Here is a 535-residue protein sequence, read N- to C-terminus: MSLSLDFNWRYVYLIAIGLKFVLALSNSYIHPDEHFQSFEVLTNKIFSFTTTTPWEFSSDTPARSFGPLYLFYAPLLYSIKLVGYELSPLQIWYMARLQNVLIGWVITDMCIYRLLPTKPERIKGLFYTSTSYITLVYQSHCFSNSIETWLVLICVLVINDLRFIQESNVPELQSQRQYQKLFWFGALVSIGIFNRITFPAFLALPSLYLMKYFRHNKMSAIFSLLGFMLPTIAIILLDTFEFNGSIDDILKHPLDFNSYVITPLNNLIYNSKVENLSNHGLHPYYTHLLVNLPQILGPGLFFMVSNFKNQYWKTTPFLAVISGVSVLSLIPHQELRFLIPIVPLVCCCFDLKNISSASKGERITKAPPMVSVLMNLWYLFNILLAVLMGVYHQGGIVPALDYFHSNIFQENSRQSVQIWWRTYSPPPWILGDKLDTLQVLTVTDDSPQFELDSSKSNYLIDAMGSDYTHVSKLIESFKDFSGSIYLIAPIASIRKHYDISMHQVWNYTHHLDLDHIDFSDFQSLKPGLGIYELL.

The Cytoplasmic segment spans residues 1-10 (MSLSLDFNWR). A helical transmembrane segment spans residues 11–31 (YVYLIAIGLKFVLALSNSYIH). Over 32 to 91 (PDEHFQSFEVLTNKIFSFTTTTPWEFSSDTPARSFGPLYLFYAPLLYSIKLVGYELSPLQ) the chain is Lumenal. Residues 92-112 (IWYMARLQNVLIGWVITDMCI) form a helical membrane-spanning segment. The Cytoplasmic segment spans residues 113-141 (YRLLPTKPERIKGLFYTSTSYITLVYQSH). Residues 142-162 (CFSNSIETWLVLICVLVINDL) traverse the membrane as a helical segment. Topologically, residues 163 to 181 (RFIQESNVPELQSQRQYQK) are lumenal. Residues 182–202 (LFWFGALVSIGIFNRITFPAF) traverse the membrane as a helical segment. Topologically, residues 203 to 220 (LALPSLYLMKYFRHNKMS) are cytoplasmic. Residues 221–241 (AIFSLLGFMLPTIAIILLDTF) form a helical membrane-spanning segment. Residues 242–284 (EFNGSIDDILKHPLDFNSYVITPLNNLIYNSKVENLSNHGLHP) are Lumenal-facing. N-linked (GlcNAc...) asparagine glycosylation is found at N244 and N276. The chain crosses the membrane as a helical span at residues 285–305 (YYTHLLVNLPQILGPGLFFMV). Topologically, residues 306-311 (SNFKNQ) are cytoplasmic. The chain crosses the membrane as a helical span at residues 312 to 332 (YWKTTPFLAVISGVSVLSLIP). Over 333 to 337 (HQELR) the chain is Lumenal. A helical membrane pass occupies residues 338-358 (FLIPIVPLVCCCFDLKNISSA). Residues 359 to 370 (SKGERITKAPPM) lie on the Cytoplasmic side of the membrane. The chain crosses the membrane as a helical span at residues 371–391 (VSVLMNLWYLFNILLAVLMGV). Residues 392–535 (YHQGGIVPAL…KPGLGIYELL (144 aa)) are Lumenal-facing. N507 carries N-linked (GlcNAc...) asparagine glycosylation.

This sequence belongs to the glycosyltransferase 22 family. PIGZ subfamily.

It localises to the endoplasmic reticulum membrane. The protein operates within glycolipid biosynthesis; glycosylphosphatidylinositol-anchor biosynthesis. Its function is as follows. Alpha-1,2-mannosyltransferase involved in glycosylphosphatidylinositol-anchor biosynthesis. Transfers a fourth mannose to trimannosyl-GPIs during GPI precursor assembly. The presence of a fourth mannose in GPI is essential in fungi. This is GPI mannosyltransferase 4 (SMP3) from Debaryomyces hansenii (strain ATCC 36239 / CBS 767 / BCRC 21394 / JCM 1990 / NBRC 0083 / IGC 2968) (Yeast).